Consider the following 433-residue polypeptide: O-methyltransferase VdtC (433 aa).

Position 284 (D284) interacts with S-adenosyl-L-methionine. H335 (proton acceptor) is an active-site residue.

It belongs to the class I-like SAM-binding methyltransferase superfamily. Cation-independent O-methyltransferase family. COMT subfamily.

It catalyses the reaction 7,9,10-trihydroxy-3-(2-oxopropyl)-1H-benzo[g]isochromen-1-one + S-adenosyl-L-methionine = 9,10-dihydroxy-7-methoxy-3-(2-oxopropyl)-1H-benzo[g]isochromen-1-one + S-adenosyl-L-homocysteine + H(+). Its pathway is secondary metabolite biosynthesis. In terms of biological role, O-methyltransferase; part of the gene cluster that mediates the biosynthesis of viriditoxin, one of the 'classical' secondary metabolites produced by fungi and that has antibacterial activity. The first step is performed by the polyketide synthase VdtA which condenses one acetyl-CoA and 6 malonyl-CoA units to form the heptaketide monomer backbone of viriditoxin. The product of VdtA is then O-methylated on C7 by the O-methyltransferase VdtC. The O-methyl group is important for the stereoselective coupling of the monomers at the final step of viriditoxin biosynthesis. The short-chain dehydrogenase/reductase VdtF then acts as a stereospecific reductase converting the pyrone to dihydropyrone via the reduction of the C3-C4 double bond. The FAD-binding monooxygenase VdtE then converts the ketone group into a methyl-ester group to yield semi-viriditoxin. Finally, the laccase VdtB is involved in dimerization of 2 semi-viriditoxin molecules to yield the final viriditoxin. VdtB is responsible for the regioselective 6,6'-coupling of semi-viriditoxin, which yields (M)-viriditoxin and (P)-viriditoxin at a ratio of 1:2. The non-catalytic carboxylesterase-like protein VdtD affects the stereochemistical outcome of the coupling. The highly reducing polyketide synthase VdtX is not involved in viriditoxin synthesis, but might possibly play a role in the production of additional metabolites not identified yet. The chain is O-methyltransferase VdtC from Byssochlamys spectabilis (Paecilomyces variotii).